A 36-amino-acid chain; its full sequence is uncharacterized protein (36 aa).

A helical membrane pass occupies residues serine 13–phenylalanine 35.

It localises to the host membrane. This is an uncharacterized protein from Pseudoalteromonas espejiana (Bacteriophage PM2).